Reading from the N-terminus, the 216-residue chain is Protein Syd (216 aa).

It belongs to the Syd family.

The protein resides in the cell inner membrane. Functionally, interacts with the SecY protein in vivo. May bind preferentially to an uncomplexed state of SecY, thus functioning either as a chelating agent for excess SecY in the cell or as a regulatory factor that negatively controls the translocase function. The protein is Protein Syd of Shewanella sp. (strain ANA-3).